Here is a 113-residue protein sequence, read N- to C-terminus: Nucleoid-associated protein Syncc9902_0023 (113 aa).

This sequence belongs to the YbaB/EbfC family. As to quaternary structure, homodimer.

The protein resides in the cytoplasm. It localises to the nucleoid. In terms of biological role, binds to DNA and alters its conformation. May be involved in regulation of gene expression, nucleoid organization and DNA protection. This is Nucleoid-associated protein Syncc9902_0023 from Synechococcus sp. (strain CC9902).